A 793-amino-acid chain; its full sequence is DnaJ homolog subfamily C member 10 (793 aa).

An N-terminal signal peptide occupies residues M1 to T32. In terms of domain architecture, J spans N35–G100. The Thioredoxin 1 domain occupies E130–H232. C158 and C161 form a disulfide bridge. Trxb stretches follow at residues T235 to F350 and P348 to F463. 3 Thioredoxin domains span residues H454–L553, S557–L665, and A671–Y776. C480 and C483 are joined by a disulfide. A glycan (N-linked (GlcNAc...) asparagine) is linked at N530. 2 cysteine pairs are disulfide-bonded: C588/C591 and C700/C703. Residues K790–L793 carry the Prevents secretion from ER motif.

As to quaternary structure, interacts with HSPA5 (via its J domain). Interacts with EDEM1.

It localises to the endoplasmic reticulum lumen. Functionally, endoplasmic reticulum disulfide reductase involved both in the correct folding of proteins and degradation of misfolded proteins. Required for efficient folding of proteins in the endoplasmic reticulum by catalyzing the removal of non-native disulfide bonds formed during the folding of proteins, such as LDLR. Also involved in endoplasmic reticulum-associated degradation (ERAD) by reducing incorrect disulfide bonds in misfolded glycoproteins recognized by EDEM1. Interaction with HSPA5 is required its activity, not for the disulfide reductase activity, but to facilitate the release of DNAJC10 from its substrate. Promotes apoptotic signaling pathway in response to endoplasmic reticulum stress. This is DnaJ homolog subfamily C member 10 (Dnajc10) from Rattus norvegicus (Rat).